Consider the following 455-residue polypeptide: EP1-like glycoprotein 2 (455 aa).

An N-terminal signal peptide occupies residues 1 to 22; it reads MSRFAILVTLALAIATVSVVIA. Positions 44–163 constitute a Bulb-type lectin domain; the sequence is EYDASYRFIE…NGKFVWQSFD (120 aa). 6 N-linked (GlcNAc...) asparagine glycosylation sites follow: asparagine 56, asparagine 106, asparagine 191, asparagine 211, asparagine 241, and asparagine 289. S-nitrosocysteine is present on cysteine 374. The PAN domain maps to 374–455; the sequence is CSGVKGKTVN…NTSSVAYIKY (82 aa). Intrachain disulfides connect cysteine 410-cysteine 432 and cysteine 414-cysteine 420. Asparagine 446 is a glycosylation site (N-linked (GlcNAc...) asparagine).

Its subcellular location is the secreted. It is found in the cell wall. The polypeptide is EP1-like glycoprotein 2 (Arabidopsis thaliana (Mouse-ear cress)).